The chain runs to 350 residues: Magnesium-chelatase 38 kDa subunit (350 aa).

An ATP-binding site is contributed by 52–59; sequence GDRGTGKS.

Belongs to the Mg-chelatase subunits D/I family.

It catalyses the reaction protoporphyrin IX + Mg(2+) + ATP + H2O = Mg-protoporphyrin IX + ADP + phosphate + 3 H(+). It participates in porphyrin-containing compound metabolism; bacteriochlorophyll biosynthesis. Functionally, involved in bacteriochlorophyll biosynthesis; introduces a magnesium ion into protoporphyrin IX to yield Mg-protoporphyrin IX. The chain is Magnesium-chelatase 38 kDa subunit (bchI) from Rhodobacter capsulatus (strain ATCC BAA-309 / NBRC 16581 / SB1003).